The following is a 408-amino-acid chain: Cytochrome bc1 complex Rieske iron-sulfur subunit (408 aa).

The next 3 membrane-spanning stretches (helical) occupy residues 56–76, 98–118, and 166–186; these read VGIWAALGILGGIGFLITYIF, MLGITSGLCIISLGIAGVLYV, and LLAGGAVMAGLTIVAPLGGMI. In terms of domain architecture, Rieske spans 293–390; it reads HGPRNAVMLI…ITVDEEGYLI (98 aa). [2Fe-2S] cluster-binding residues include cysteine 333, histidine 335, cysteine 352, and histidine 355. Residues cysteine 338 and cysteine 354 are joined by a disulfide bond.

Belongs to the Rieske iron-sulfur protein family. The cytochrome bc1 complex is composed of a cytochrome b (QcrB), the Rieske iron-sulfur protein (QcrA) and a diheme cytochrome c (QcrC) subunit. The bc1 complex forms a supercomplex with cytochrome c oxidase (cytochrome aa3). Requires [2Fe-2S] cluster as cofactor.

The protein localises to the cell membrane. In terms of biological role, iron-sulfur subunit of the cytochrome bc1 complex, an essential component of the respiratory electron transport chain required for ATP synthesis. The bc1 complex catalyzes the oxidation of menaquinol and the reduction of cytochrome c in the respiratory chain. The bc1 complex operates through a Q-cycle mechanism that couples electron transfer to generation of the proton gradient that drives ATP synthesis. The sequence is that of Cytochrome bc1 complex Rieske iron-sulfur subunit (qcrA) from Corynebacterium efficiens (strain DSM 44549 / YS-314 / AJ 12310 / JCM 11189 / NBRC 100395).